A 417-amino-acid chain; its full sequence is Serine hydroxymethyltransferase 3 (417 aa).

(6S)-5,6,7,8-tetrahydrofolate is bound by residues L121 and G125–L127. K230 carries the N6-(pyridoxal phosphate)lysine modification. Residue S355–F357 coordinates (6S)-5,6,7,8-tetrahydrofolate.

It belongs to the SHMT family. In terms of assembly, homodimer. Pyridoxal 5'-phosphate serves as cofactor.

The protein localises to the cytoplasm. The catalysed reaction is (6R)-5,10-methylene-5,6,7,8-tetrahydrofolate + glycine + H2O = (6S)-5,6,7,8-tetrahydrofolate + L-serine. It participates in one-carbon metabolism; tetrahydrofolate interconversion. It functions in the pathway amino-acid biosynthesis; glycine biosynthesis; glycine from L-serine: step 1/1. Catalyzes the reversible interconversion of serine and glycine with tetrahydrofolate (THF) serving as the one-carbon carrier. This reaction serves as the major source of one-carbon groups required for the biosynthesis of purines, thymidylate, methionine, and other important biomolecules. Also exhibits THF-independent aldolase activity toward beta-hydroxyamino acids, producing glycine and aldehydes, via a retro-aldol mechanism. The protein is Serine hydroxymethyltransferase 3 of Pseudomonas fluorescens (strain Pf0-1).